Here is a 171-residue protein sequence, read N- to C-terminus: uncharacterized protein (171 aa).

The HTH marR-type domain maps to 33–166 (AISIATNLYR…LTGLLRKVAD (134 aa)). A DNA-binding region (H-T-H motif) is located at residues 80–103 (TRKIAELSGISTATASNVIKTLEK).

This is an uncharacterized protein from Bacillus subtilis (strain 168).